A 481-amino-acid chain; its full sequence is Probable zeta-carotene desaturase (481 aa).

The protein belongs to the zeta carotene desaturase family. Decylplastoquinone is required as a cofactor. Requires 6-decylubiquinone as cofactor.

The catalysed reaction is 9,9'-di-cis-zeta-carotene + 2 a quinone = 7,7',9,9'-tetra-cis-lycopene + 2 a quinol. Its pathway is carotenoid biosynthesis; lycopene biosynthesis. Catalyzes the conversion of zeta-carotene to lycopene via the intermediary of neurosporene. It carries out two consecutive desaturations (introduction of double bonds) at positions C-7 and C-7'. The polypeptide is Probable zeta-carotene desaturase (zds) (Synechococcus elongatus (strain ATCC 33912 / PCC 7942 / FACHB-805) (Anacystis nidulans R2)).